A 119-amino-acid chain; its full sequence is Large ribosomal subunit protein bL20 (119 aa).

The protein belongs to the bacterial ribosomal protein bL20 family.

In terms of biological role, binds directly to 23S ribosomal RNA and is necessary for the in vitro assembly process of the 50S ribosomal subunit. It is not involved in the protein synthesizing functions of that subunit. The protein is Large ribosomal subunit protein bL20 of Methylocella silvestris (strain DSM 15510 / CIP 108128 / LMG 27833 / NCIMB 13906 / BL2).